An 808-amino-acid chain; its full sequence is MPPAAMAPPPPPQGSSTGDPLYDELWHACAGPLVTVPRVGDLVFYFPQGHIEQVEASMNQVADSQMRLYDLPSKLLCRVLNVELKAEQDTDEVYAQVMLMPEPEQNEMAVEKTTPTSGPVQARPPVRSFCKTLTASDTSTHGGFSVLRRHADECLPPLDMTQSPPTQELVAKDLHSMDWRFRHIFRGQPRRHLLQSGWSVFVSSKRLVAGDAFIFLRGENGELRVGVRRAMRQLSNVPSSVISSQSMHLGVLATAWHAINTKSMFTVYYKPRTSPSEFIIPYDQYMESVKNNYSVGMRFRMRFEGEEAPEQRFTGTIIGSENLDPVWPESSWRSLKVRWDEPSTIPRPDRVSPWKIEPASSPPVNPLPLSRVKRPRPNAPPASPESPILTKEAATKVDTDPAQAQRSQNSTVLQGQEQMTLRSNLTESNDSDVTAHKPMMWSPSPNAAKAHPLTFQQRPPMDNWMQLGRRETDFKDVRSGSQSFGDSPGFFMQNFDEAPNRLTSFKNQFQDQGSARHFSDPYYYVSPQPSLTVESSTQMHTDSKELHFWNGQSTVYGNSRDRPQNFRFEQNSSSWLNQSFARPEQPRVIRPHASIAPVELEKTEGSGFKIFGFKVDTTNAPNNHLSSPMAATHEPMLQTPSSLNQLQPVQTDCIPEVSVSTAGTATENEKSGQQAQQSSKDVQSKTQVASTRSCTKVHKQGVALGRSVDLSKFSNYDELKAELDKMFEFDGELVSSNKNWQIVYTDNEGDMMLVGDDPWEEFCSIVRKIYIYTKEEVQKMNSKSNAPRKDDSSENEKGHLPMPNKSDN.

Pro residues predominate over residues 1–13 (MPPAAMAPPPPPQ). The segment at 1–20 (MPPAAMAPPPPPQGSSTGDP) is disordered. Residues 129–231 (FCKTLTASDT…ELRVGVRRAM (103 aa)) constitute a DNA-binding region (TF-B3). The span at 342–352 (PSTIPRPDRVS) shows a compositional bias: basic and acidic residues. Disordered stretches follow at residues 342–433 (PSTI…DSDV), 661–691 (TAGT…VAST), and 778–808 (QKMN…KSDN). Residues 402–432 (AQAQRSQNSTVLQGQEQMTLRSNLTESNDSD) show a composition bias toward polar residues. Residues 692 to 785 (RSCTKVHKQG…EVQKMNSKSN (94 aa)) form the PB1 domain. Residues 787–799 (PRKDDSSENEKGH) show a composition bias toward basic and acidic residues.

The protein belongs to the ARF family. Homodimers and heterodimers. In terms of tissue distribution, expressed in roots, culms, leaves and young panicles.

The protein resides in the nucleus. Auxin response factors (ARFs) are transcriptional factors that bind specifically to the DNA sequence 5'-TGTCTC-3' found in the auxin-responsive promoter elements (AuxREs). In Oryza sativa subsp. japonica (Rice), this protein is Auxin response factor 4 (ARF4).